The chain runs to 947 residues: Coiled-coil domain-containing protein 39 (947 aa).

4 coiled-coil regions span residues A16 to N194, Q221 to L402, K471 to I522, and V582 to G813. Low complexity-rich tracts occupy residues S866–P911 and S926–P947. The disordered stretch occupies residues S866–P947.

The protein belongs to the CCDC39 family.

The protein localises to the cytoplasm. It is found in the cytoskeleton. The protein resides in the cilium axoneme. Its function is as follows. Required for assembly of dynein regulatory complex (DRC) and inner dynein arm (IDA) complexes, which are responsible for ciliary beat regulation, thereby playing a central role in motility in cilia and flagella. Probably acts together with ccdc40 to form a molecular ruler that determines the 96 nanometer (nm) repeat length and arrangements of components in cilia and flagella. Not required for outer dynein arm complexes assembly. The protein is Coiled-coil domain-containing protein 39 (ccdc39) of Danio rerio (Zebrafish).